The chain runs to 302 residues: Adipolin (302 aa).

The N-terminal stretch at 1-20 (MRRWAWAAVVVLLGPQLVLL) is a signal peptide. 2 disordered regions span residues 28 to 68 (EAQR…GPEF) and 86 to 110 (ALRK…PPGA). N43 is a glycosylation site (N-linked (GlcNAc...) asparagine). Basic and acidic residues predominate over residues 86 to 100 (ALRKRCGSRDKKPRD). Residues 147 to 302 (LRLVGEAFHC…SSFSGLLLGT (156 aa)) form the C1q domain.

This sequence belongs to the adipolin/erythroferrone family. In terms of assembly, homomultimer; disulfide-linked. May interact with ERFE. Processed into Adipolin fC1QTNF12 and Adipolin gC1QTNF12 by FURIN. Insulin enhances endogenous C1QTNF12 cleavage. In terms of tissue distribution, predominantly expressed by adipose tissues.

The protein localises to the secreted. Its function is as follows. Insulin-sensitizing adipocyte-secreted protein (adipokine) that regulates glucose metabolism in liver and adipose tissue. Promotes glucose uptake in adipocytes and suppresses de novo glucose production in hepatocytes via the PI3K-Akt signaling pathway. Administration lead to reduction of blood glucose. Able to attenuate inflammation in fat tissue. The chain is Adipolin from Homo sapiens (Human).